The primary structure comprises 197 residues: Xanthine phosphoribosyltransferase (197 aa).

Residues Leu20 and Asn27 each coordinate xanthine. 128 to 132 (ANGQA) contributes to the 5-phospho-alpha-D-ribose 1-diphosphate binding site. Lys156 is a binding site for xanthine.

This sequence belongs to the purine/pyrimidine phosphoribosyltransferase family. Xpt subfamily. In terms of assembly, homodimer.

The protein localises to the cytoplasm. The enzyme catalyses XMP + diphosphate = xanthine + 5-phospho-alpha-D-ribose 1-diphosphate. The protein operates within purine metabolism; XMP biosynthesis via salvage pathway; XMP from xanthine: step 1/1. Its function is as follows. Converts the preformed base xanthine, a product of nucleic acid breakdown, to xanthosine 5'-monophosphate (XMP), so it can be reused for RNA or DNA synthesis. The polypeptide is Xanthine phosphoribosyltransferase (Bacillus anthracis (strain A0248)).